Here is a 225-residue protein sequence, read N- to C-terminus: Peptidyl-tRNA hydrolase (225 aa).

Residue Tyr14 participates in tRNA binding. The Proton acceptor role is filled by His19. Residues Phe64, Asn66, and Asn112 each contribute to the tRNA site. The disordered stretch occupies residues 182 to 225 (AVALRMQPPKPEKPKPAAKAPEAQAPEAAPDERSALQKLADRFR). Low complexity predominate over residues 198–209 (AAKAPEAQAPEA). Over residues 211-225 (PDERSALQKLADRFR) the composition is skewed to basic and acidic residues.

It belongs to the PTH family. In terms of assembly, monomer.

It is found in the cytoplasm. The catalysed reaction is an N-acyl-L-alpha-aminoacyl-tRNA + H2O = an N-acyl-L-amino acid + a tRNA + H(+). Its function is as follows. Hydrolyzes ribosome-free peptidyl-tRNAs (with 1 or more amino acids incorporated), which drop off the ribosome during protein synthesis, or as a result of ribosome stalling. Functionally, catalyzes the release of premature peptidyl moieties from peptidyl-tRNA molecules trapped in stalled 50S ribosomal subunits, and thus maintains levels of free tRNAs and 50S ribosomes. The chain is Peptidyl-tRNA hydrolase from Cereibacter sphaeroides (strain ATCC 17029 / ATH 2.4.9) (Rhodobacter sphaeroides).